The chain runs to 142 residues: Sec-independent protein translocase protein TatB (142 aa).

The chain crosses the membrane as a helical span at residues 1-21; it reads MFDIGASELLVLVIVAIVVIG. A disordered region spans residues 75–142; the sequence is RETAAQETAA…PAARPGSQQP (68 aa). Low complexity predominate over residues 76-94; sequence ETAAQETAAAQGQTPAAAE. Residues 123–133 are compositionally biased toward basic and acidic residues; the sequence is AKVEARVEEAP.

It belongs to the TatB family. The Tat system comprises two distinct complexes: a TatABC complex, containing multiple copies of TatA, TatB and TatC subunits, and a separate TatA complex, containing only TatA subunits. Substrates initially bind to the TatABC complex, which probably triggers association of the separate TatA complex to form the active translocon.

It localises to the cell inner membrane. In terms of biological role, part of the twin-arginine translocation (Tat) system that transports large folded proteins containing a characteristic twin-arginine motif in their signal peptide across membranes. Together with TatC, TatB is part of a receptor directly interacting with Tat signal peptides. TatB may form an oligomeric binding site that transiently accommodates folded Tat precursor proteins before their translocation. This Novosphingobium aromaticivorans (strain ATCC 700278 / DSM 12444 / CCUG 56034 / CIP 105152 / NBRC 16084 / F199) protein is Sec-independent protein translocase protein TatB.